The chain runs to 395 residues: Elongation factor Tu (395 aa).

The tr-type G domain maps to 10 to 204 (KPHVNIGTIG…TVDEYIPTPQ (195 aa)). A G1 region spans residues 19–26 (GHVDHGKT). 19-26 (GHVDHGKT) contacts GTP. Thr-26 provides a ligand contact to Mg(2+). The interval 60-64 (GITIN) is G2. The interval 81-84 (DAPG) is G3. GTP is bound by residues 81 to 85 (DAPGH) and 136 to 139 (NKCD). A G4 region spans residues 136 to 139 (NKCD). The interval 174 to 176 (SAL) is G5.

This sequence belongs to the TRAFAC class translation factor GTPase superfamily. Classic translation factor GTPase family. EF-Tu/EF-1A subfamily. As to quaternary structure, monomer.

The protein localises to the cytoplasm. It catalyses the reaction GTP + H2O = GDP + phosphate + H(+). Its function is as follows. GTP hydrolase that promotes the GTP-dependent binding of aminoacyl-tRNA to the A-site of ribosomes during protein biosynthesis. This chain is Elongation factor Tu, found in Ligilactobacillus salivarius (strain UCC118) (Lactobacillus salivarius).